The chain runs to 508 residues: Photosystem II CP47 reaction center protein (508 aa).

The next 6 membrane-spanning stretches (helical) occupy residues 21 to 36 (SVHI…WAGS), 101 to 115 (IVFS…IWHW), 140 to 156 (GIHL…FGAF), 203 to 218 (IAAG…FHLS), 237 to 252 (VLSS…AFVV), and 457 to 472 (SFAL…HGAR).

It belongs to the PsbB/PsbC family. PsbB subfamily. PSII is composed of 1 copy each of membrane proteins PsbA, PsbB, PsbC, PsbD, PsbE, PsbF, PsbH, PsbI, PsbJ, PsbK, PsbL, PsbM, PsbT, PsbX, PsbY, PsbZ, Psb30/Ycf12, at least 3 peripheral proteins of the oxygen-evolving complex and a large number of cofactors. It forms dimeric complexes. It depends on Binds multiple chlorophylls. PSII binds additional chlorophylls, carotenoids and specific lipids. as a cofactor.

Its subcellular location is the plastid. It localises to the chloroplast thylakoid membrane. One of the components of the core complex of photosystem II (PSII). It binds chlorophyll and helps catalyze the primary light-induced photochemical processes of PSII. PSII is a light-driven water:plastoquinone oxidoreductase, using light energy to abstract electrons from H(2)O, generating O(2) and a proton gradient subsequently used for ATP formation. The polypeptide is Photosystem II CP47 reaction center protein (Aethionema cordifolium (Lebanon stonecress)).